Consider the following 297-residue polypeptide: Heterogeneous nuclear ribonucleoprotein D-like (297 aa).

The disordered stretch occupies residues 1-21 (MTGFGATPDFNEGSKINASKN). RRM domains lie at 26-108 (GKMF…KGKE) and 111-190 (KKVF…QPKE). Residues 192-224 (YRQQQQKQQKGGRGAATGRGGARGRGRGQGWNQ) form a disordered region. Positions 202–222 (GGRGAATGRGGARGRGRGQGW) are enriched in gly residues.

The protein resides in the nucleus. The protein localises to the cytoplasm. Acts as a transcriptional regulator. Binds DNA and RNA. This is Heterogeneous nuclear ribonucleoprotein D-like (hnrnpdl) from Xenopus tropicalis (Western clawed frog).